The following is a 564-amino-acid chain: MRFSQLYAPTLRENPADAEIPSQALLQRAGFIRKIAAGVYTYLPLARRTLLKIENIVREEMDRIGAQEILMPIIQPAELWIKSGRWDDYGPEMMKLKDRHNRDFTLGPTHEELVTELVKNELNSYKQLPVTLYQIANKYRDEIRPRFGVLRAREFIMKDAYSFHDSWESLDEVYKKFKEAYSRILERIGLRYTVIEASSGAIGGKESHEFVAFAEYGESNILYCDCGYAGSDEKVPYMGEYEVFDEDEKERELVHTPNVRTVEEVAQYLGVEIKRIVKSLIFKGRDGYVMVLVPGNRELNFEKLKAYLGDQSLQMALPENILEDFGVPIGFLGPVGISNVKIVADKGIKYMKNFVVGGMKKNYHYINVNLERDFQVEEWADLVVVNPGEPCPVCGKPLKSERGIELGHIFKLGTKYSETMDVKYMNKDGKMKPFIMGCYGWGISRTLGAIVEQLHDDNGIIWPVSVAPYEVVITVVGKENEKSFAEKLYRYLLDKGVDVLIDDRDVSPGVKFKDADLIGFPLRITIGKSYKDGKVELKERVGNVTIIEADEEVILKNVQHILKR.

This sequence belongs to the class-II aminoacyl-tRNA synthetase family. ProS type 1 subfamily. As to quaternary structure, homodimer.

Its subcellular location is the cytoplasm. The enzyme catalyses tRNA(Pro) + L-proline + ATP = L-prolyl-tRNA(Pro) + AMP + diphosphate. Its function is as follows. Catalyzes the attachment of proline to tRNA(Pro) in a two-step reaction: proline is first activated by ATP to form Pro-AMP and then transferred to the acceptor end of tRNA(Pro). As ProRS can inadvertently accommodate and process non-cognate amino acids such as alanine and cysteine, to avoid such errors it has two additional distinct editing activities against alanine. One activity is designated as 'pretransfer' editing and involves the tRNA(Pro)-independent hydrolysis of activated Ala-AMP. The other activity is designated 'posttransfer' editing and involves deacylation of mischarged Ala-tRNA(Pro). The misacylated Cys-tRNA(Pro) is not edited by ProRS. The protein is Proline--tRNA ligase of Thermosipho melanesiensis (strain DSM 12029 / CIP 104789 / BI429).